Here is a 222-residue protein sequence, read N- to C-terminus: Glutathione S-transferase A4 (222 aa).

M1 carries the post-translational modification N-acetylmethionine. In terms of domain architecture, GST N-terminal spans 3–83 (ARPKLHYPNG…YIADKHNLFG (81 aa)). Residues Y9, 54 to 55 (QV), and 67 to 68 (QT) each bind glutathione. A GST C-terminal domain is found at 85 to 208 (NLKERTLIDM…EPGSKKKPPP (124 aa)). Y212 is a substrate binding site.

The protein belongs to the GST superfamily. Alpha family. In terms of assembly, homodimer. In terms of tissue distribution, expressed at a high level in brain, placenta, and skeletal muscle and much lower in lung and liver.

Its subcellular location is the cytoplasm. The catalysed reaction is RX + glutathione = an S-substituted glutathione + a halide anion + H(+). Conjugation of reduced glutathione to a wide number of exogenous and endogenous hydrophobic electrophiles. This isozyme has a high catalytic efficiency with 4-hydroxyalkenals such as 4-hydroxynonenal (4-HNE). The sequence is that of Glutathione S-transferase A4 (GSTA4) from Homo sapiens (Human).